The chain runs to 276 residues: 2-hydroxy-6-oxo-2,4-heptadienoate hydrolase (276 aa).

An AB hydrolase-1 domain is found at 28–259; that stretch reads NPVVLVHGSG…GRCGHWVQIE (232 aa). Residues Ser105, Asp226, and His254 contribute to the active site.

The protein belongs to the DmpD/TodF/XylF esterase family.

It catalyses the reaction (2Z,4E)-2-hydroxy-6-oxohepta-2,4-dienoate + H2O = (2Z)-2-hydroxypenta-2,4-dienoate + acetate + H(+). Its pathway is xenobiotic degradation; toluene degradation. Its function is as follows. Catalyzes the hydrolysis of 2-hydroxy-6-oxohepta-2,4-dienoate into 2-hydroxypenta-2,4-dienoate and acetate. The sequence is that of 2-hydroxy-6-oxo-2,4-heptadienoate hydrolase (todF) from Pseudomonas putida (strain ATCC 700007 / DSM 6899 / JCM 31910 / BCRC 17059 / LMG 24140 / F1).